The sequence spans 56 residues: Small ribosomal subunit protein uS14 (56 aa).

4 residues coordinate Zn(2+): cysteine 21, cysteine 24, cysteine 39, and cysteine 42.

Belongs to the universal ribosomal protein uS14 family. Component of the 40S small ribosomal subunit. Zn(2+) is required as a cofactor.

The protein localises to the cytoplasm. It is found in the cytosol. The protein resides in the rough endoplasmic reticulum. The protein is Small ribosomal subunit protein uS14 (RpS29) of Spodoptera frugiperda (Fall armyworm).